The sequence spans 131 residues: Large ribosomal subunit protein bL17 (131 aa).

This sequence belongs to the bacterial ribosomal protein bL17 family. In terms of assembly, part of the 50S ribosomal subunit. Contacts protein L32.

This is Large ribosomal subunit protein bL17 from Oenococcus oeni (strain ATCC BAA-331 / PSU-1).